The following is a 375-amino-acid chain: Zinc finger CCCH domain-containing protein 57 (375 aa).

5 consecutive C3H1-type zinc fingers follow at residues 42–70 (RHGE…HPHD), 87–115 (RIGQ…HPRN), 133–161 (RPNE…HPQT), 243–271 (RPGQ…HPRD), and 289–317 (RPGE…HPMR). A disordered region spans residues 352–375 (SVEAKPTSLPETTSAKDTIVDAQH).

The protein resides in the nucleus. The sequence is that of Zinc finger CCCH domain-containing protein 57 (ZFN3) from Arabidopsis thaliana (Mouse-ear cress).